A 311-amino-acid chain; its full sequence is Transcription initiation factor IIB (311 aa).

The TFIIB-type zinc-finger motif lies at 11-42 (KETKCPECGSTKLINDHERGEVVCGACGLVID). Zn(2+)-binding residues include C15, C18, C34, and C37. Tandem repeats lie at residues 128-211 (SELD…TREL) and 222-303 (DYVP…ELTE).

This sequence belongs to the TFIIB family.

In terms of biological role, stabilizes TBP binding to an archaeal box-A promoter. Also responsible for recruiting RNA polymerase II to the pre-initiation complex (DNA-TBP-TFIIB). This is Transcription initiation factor IIB from Methanosphaera stadtmanae (strain ATCC 43021 / DSM 3091 / JCM 11832 / MCB-3).